Consider the following 171-residue polypeptide: Putative auxin-responsive protein IAA29 (171 aa).

In terms of domain architecture, PB1 spans 19–114 (SRFVKVFMHG…TVKKIYIVPA (96 aa)). Positions 117–171 (QNENDYQEEEEDNAAAAATADEDGDGAAADDGVAAAADDVDDVAGYTSNDDPSFD) are disordered. Over residues 142–153 (GAAADDGVAAAA) the composition is skewed to low complexity. The segment covering 162-171 (YTSNDDPSFD) has biased composition (polar residues).

This sequence belongs to the Aux/IAA family. In terms of assembly, homodimers and heterodimers.

It localises to the nucleus. Functionally, aux/IAA proteins are short-lived transcriptional factors that function as repressors of early auxin response genes at low auxin concentrations. The polypeptide is Putative auxin-responsive protein IAA29 (IAA29) (Oryza sativa subsp. japonica (Rice)).